A 175-amino-acid chain; its full sequence is NADH dehydrogenase [ubiquinone] iron-sulfur protein 4, mitochondrial (175 aa).

A mitochondrion-targeting transit peptide spans 1-42 (MAAVSMSVSLRQALLRQRAVATAAVSVCRVPSRLLNTSTWKL). The segment at 152 to 175 (VPKPKSKSYGANFSWNKRTRVSTK) is disordered. Phosphoserine is present on Ser173.

This sequence belongs to the complex I NDUFS4 subunit family. In terms of assembly, mammalian complex I is composed of 45 different subunits. This is a component of the iron-sulfur (IP) fragment of the enzyme. Interacts with BCAP31 and TOMM40; the interaction mediates its translocation to the mitochondria; the interaction with BCAP31 is direct.

It is found in the mitochondrion inner membrane. Accessory subunit of the mitochondrial membrane respiratory chain NADH dehydrogenase (Complex I), that is believed not to be involved in catalysis. Complex I functions in the transfer of electrons from NADH to the respiratory chain. The immediate electron acceptor for the enzyme is believed to be ubiquinone. The protein is NADH dehydrogenase [ubiquinone] iron-sulfur protein 4, mitochondrial (Ndufs4) of Rattus norvegicus (Rat).